We begin with the raw amino-acid sequence, 959 residues long: UPF0182 protein MAE_41360 (959 aa).

9 helical membrane-spanning segments follow: residues 13 to 33 (PILLFLGCLVIGQLGVLVVAN), 50 to 70 (LSWQLGLGWGSAILSLLFIFT), 99 to 119 (LLGLLIIATGIGAWIGSMLLY), 156 to 176 (DISSNLWQGLIIAFLVLGLLI), 184 to 204 (IISIVFTVMLSFIIAGQWANF), 239 to 259 (LWLTGVGIYTLFAVILTYLFS), 276 to 296 (LRHLYALWSGLMGLLVLHHII), 319 to 339 (VGQFIEIILGIIAGITSIWLG), and 362 to 382 (FFPYLVPVFLYLIVWISGTII).

It belongs to the UPF0182 family.

It is found in the cell membrane. This is UPF0182 protein MAE_41360 from Microcystis aeruginosa (strain NIES-843 / IAM M-2473).